A 308-amino-acid polypeptide reads, in one-letter code: Testis-specific Y-encoded protein 3 (308 aa).

The protein belongs to the nucleosome assembly protein (NAP) family.

It localises to the cytoplasm. It is found in the nucleus. Functionally, may be involved in sperm differentiation and proliferation. In Homo sapiens (Human), this protein is Testis-specific Y-encoded protein 3 (TSPY3).